The following is a 258-amino-acid chain: Trans-aconitate 2-methyltransferase (258 aa).

This sequence belongs to the methyltransferase superfamily. Tam family.

It localises to the cytoplasm. The catalysed reaction is trans-aconitate + S-adenosyl-L-methionine = (E)-3-(methoxycarbonyl)pent-2-enedioate + S-adenosyl-L-homocysteine. Functionally, catalyzes the S-adenosylmethionine monomethyl esterification of trans-aconitate. The sequence is that of Trans-aconitate 2-methyltransferase from Methylobacterium nodulans (strain LMG 21967 / CNCM I-2342 / ORS 2060).